The chain runs to 862 residues: Genome polyprotein (862 aa).

A lipid anchor (N-myristoyl glycine; by host) is attached at Gly-2.

The protein belongs to the picornaviruses polyprotein family. Interacts with capsid protein VP1 and capsid protein VP3 to form heterotrimeric protomers. In terms of assembly, interacts with capsid protein VP0, and capsid protein VP3 to form heterotrimeric protomers. Five protomers subsequently associate to form pentamers which serve as building blocks for the capsid. Interacts with capsid protein VP2, capsid protein VP3 and capsid protein VP4 following cleavage of capsid protein VP0. As to quaternary structure, interacts with capsid protein VP1 and capsid protein VP3 in the mature capsid. Interacts with capsid protein VP0 and capsid protein VP1 to form heterotrimeric protomers. Five protomers subsequently associate to form pentamers which serve as building blocks for the capsid. Interacts with capsid protein VP4 in the mature capsid. Interacts with protein 2C; this interaction may be important for virion morphogenesis. In terms of assembly, interacts with capsid protein VP1 and capsid protein VP3. Specific enzymatic cleavages in vivo by the viral proteases yield processing intermediates and the mature proteins. Post-translationally, myristoylation is required for the formation of pentamers during virus assembly. Further assembly of 12 pentamers and a molecule of genomic RNA generates the provirion. In terms of processing, during virion maturation, immature virions are rendered infectious following cleavage of VP0 into VP4 and VP2. This maturation seems to be an autocatalytic event triggered by the presence of RNA in the capsid and it is followed by a conformational change infectious virion. Myristoylation is required during RNA encapsidation and formation of the mature virus particle.

It is found in the virion. It localises to the host cytoplasm. Forms an icosahedral capsid of pseudo T=3 symmetry with capsid proteins VP2 and VP3. The capsid is 300 Angstroms in diameter, composed of 60 copies of each capsid protein and enclosing the viral positive strand RNA genome. Capsid protein VP1 mainly forms the vertices of the capsid. Capsid protein VP1 interacts with host cell receptor to provide virion attachment to target host cells. This attachment induces virion internalization. Tyrosine kinases are probably involved in the entry process. After binding to its receptor, the capsid undergoes conformational changes. Capsid protein VP1 N-terminus (that contains an amphipathic alpha-helix) and capsid protein VP4 are externalized. Together, they shape a pore in the host membrane through which viral genome is translocated to host cell cytoplasm. Functionally, forms an icosahedral capsid of pseudo T=3 symmetry with capsid proteins VP2 and VP3. The capsid is 300 Angstroms in diameter, composed of 60 copies of each capsid protein and enclosing the viral positive strand RNA genome. In terms of biological role, lies on the inner surface of the capsid shell. After binding to the host receptor, the capsid undergoes conformational changes. Capsid protein VP4 is released, Capsid protein VP1 N-terminus is externalized, and together, they shape a pore in the host membrane through which the viral genome is translocated into the host cell cytoplasm. Its function is as follows. Component of immature procapsids, which is cleaved into capsid proteins VP4 and VP2 after maturation. Allows the capsid to remain inactive before the maturation step. The protein is Genome polyprotein of Echovirus 16 (strain Harrington).